The primary structure comprises 108 residues: Competence protein ComGC (108 aa).

A signal peptide spans 1 to 13; sequence MKKMMTFLKKAKV. Residues 14–39 form a may be involved in polymerization of ComGC region; the sequence is KAFTLVEMLVVLLIISVLFLLFVPNL. F16 bears the N-methylphenylalanine mark. A helical membrane pass occupies residues 16-36; it reads FTLVEMLVVLLIISVLFLLFV.

Belongs to the ComGC family. In terms of assembly, the transformation pili are flexible filaments, consisting mainly of the major pilin ComGC and smaller amounts of the minor pilins, including at least ComGD, ComGF and ComGG, and perhaps ComGE. Homodimer. Forms higher-order multimers. Interacts with ComGG; the interaction is probably direct. Undergoes proteolytic cleavage.

It localises to the cell membrane. The protein localises to the cell surface. Its subcellular location is the fimbrium. It is found in the secreted. Major component of the type IV-like pilus (T4P) that plays a role in transformation. Transformation pili are dynamically extended and retracted, perhaps thereby promoting DNA uptake and transformation. Required for transformation. Required for DNA binding. This is Competence protein ComGC from Streptococcus pneumoniae (strain ATCC BAA-255 / R6).